The chain runs to 288 residues: Glandicoline B O-methyltransferase roqN (288 aa).

S-adenosyl-L-methionine is bound by residues T57, D82, and 109–110; that span reads DA.

Belongs to the class I-like SAM-binding methyltransferase superfamily.

The enzyme catalyses glandicoline B + S-adenosyl-L-methionine = meleagrin + S-adenosyl-L-homocysteine + H(+). It participates in alkaloid biosynthesis. In terms of biological role, glandicoline B O-methyltransferase; part of the gene cluster that mediates the biosynthesis of the mycotoxin meleagrin. The first stage is catalyzed by the dipeptide synthase roqA which condenses histidine and tryptophan to produce histidyltryptophanyldiketopiperazine (HTD). HTD is then converted to roquefortine C through two possible pathways. In the first pathway, prenyltransferase roqD transforms HTD to the intermediate roquefortine D, which is in turn converted to roquefortine C by the cytochrome P450 monooxygenase roqR. In the second pathway, HTD is first converted to the intermediate dehydrohistidyltryptophanyldi-ketopiperazine (DHTD) by roqR which is then prenylated by roqD to form roquefortine C. Roquefortine C can be further transformed to meleagrin via three more reactions including oxydation to glandicolin A by roqM, which is further reduced to glandicoline B by roqO. Finally, glandicoline B is converted to meleagrin by the glandicoline B O-methyltransferase roqN. More studies identified further branching and additional metabolites produced by the roquefortine/meleagrin cluster, including roquefortine F, roquefortine L, roquefortine M, roquefortine N and neoxaline. The chain is Glandicoline B O-methyltransferase roqN from Penicillium rubens (strain ATCC 28089 / DSM 1075 / NRRL 1951 / Wisconsin 54-1255) (Penicillium chrysogenum).